A 514-amino-acid polypeptide reads, in one-letter code: Peptide chain release factor 3 (514 aa).

The 261-residue stretch at 8 to 268 (KKRRTFAIIS…TFLEFAPEPH (261 aa)) folds into the tr-type G domain. Residues 17 to 24 (SHPDAGKT), 85 to 89 (DTPGH), and 139 to 142 (NKLD) contribute to the GTP site.

This sequence belongs to the TRAFAC class translation factor GTPase superfamily. Classic translation factor GTPase family. PrfC subfamily.

Its subcellular location is the cytoplasm. In terms of biological role, increases the formation of ribosomal termination complexes and stimulates activities of RF-1 and RF-2. It binds guanine nucleotides and has strong preference for UGA stop codons. It may interact directly with the ribosome. The stimulation of RF-1 and RF-2 is significantly reduced by GTP and GDP, but not by GMP. The chain is Peptide chain release factor 3 from Streptococcus agalactiae serotype Ia (strain ATCC 27591 / A909 / CDC SS700).